Consider the following 384-residue polypeptide: Histidinol-phosphate aminotransferase 2 (384 aa).

At K236 the chain carries N6-(pyridoxal phosphate)lysine.

It belongs to the class-II pyridoxal-phosphate-dependent aminotransferase family. Histidinol-phosphate aminotransferase subfamily. As to quaternary structure, homodimer. Pyridoxal 5'-phosphate serves as cofactor.

The catalysed reaction is L-histidinol phosphate + 2-oxoglutarate = 3-(imidazol-4-yl)-2-oxopropyl phosphate + L-glutamate. It participates in amino-acid biosynthesis; L-histidine biosynthesis; L-histidine from 5-phospho-alpha-D-ribose 1-diphosphate: step 7/9. The polypeptide is Histidinol-phosphate aminotransferase 2 (hisC2) (Nostoc sp. (strain PCC 7120 / SAG 25.82 / UTEX 2576)).